The following is a 288-amino-acid chain: Extracellular ribonuclease (288 aa).

The first 26 residues, 1 to 26 (MTKKAWFLPLVCVLLISGWLAPAASA), serve as a signal peptide directing secretion.

The protein resides in the secreted. Its function is as follows. Mg(2+)-activated ribonuclease which hydrolyzes RNA apparently nonspecifically into oligonucleotides with 5'-terminal phosphate. The chain is Extracellular ribonuclease (bsn) from Bacillus subtilis (strain 168).